The chain runs to 502 residues: Hexokinase-2 (502 aa).

Residues 4–24 form a helical membrane-spanning segment; the sequence is VAVATTVVCSVAVCAAAALIV. A Hexokinase domain is found at 35 to 487; that stretch reads ARVIEILKAF…SGVGAALLAA (453 aa). Positions 90–228 are hexokinase small subdomain; sequence SGDETGFFYA…GLDMLVAALV (139 aa). ADP contacts are provided by G104, T105, and N106. T194, K195, N229, and D230 together coordinate D-glucose. Residues 229–476 form a hexokinase large subdomain region; the sequence is NDTIGTLAGG…ESVEVILSND (248 aa). T253 lines the ADP pocket. D-glucose contacts are provided by N256, E284, and E315. G441 serves as a coordination point for ADP.

Belongs to the hexokinase family. As to expression, highly expressed in siliques, at intermediate levels in roots and flowers, and at lower levels in stems, rosette and cauline leaves.

The protein resides in the mitochondrion outer membrane. The catalysed reaction is a D-hexose + ATP = a D-hexose 6-phosphate + ADP + H(+). It carries out the reaction D-fructose + ATP = D-fructose 6-phosphate + ADP + H(+). It catalyses the reaction D-glucose + ATP = D-glucose 6-phosphate + ADP + H(+). Its pathway is carbohydrate metabolism; hexose metabolism. It functions in the pathway carbohydrate degradation; glycolysis; D-glyceraldehyde 3-phosphate and glycerone phosphate from D-glucose: step 1/4. Its function is as follows. Fructose and glucose phosphorylating enzyme. May be involved in the phosphorylation of glucose during the export from mitochondrion to cytosol. Acts as a sugar sensor which may regulate sugar-dependent gene repression or activation. Mediates the effects of sugar on plant growth and development independently of its catalytic activity or the sugar metabolism. May regulate the execution of program cell death in plant cells. The protein is Hexokinase-2 (HXK2) of Arabidopsis thaliana (Mouse-ear cress).